A 1101-amino-acid polypeptide reads, in one-letter code: Serine/threonine-protein kinase PSK2 (1101 aa).

A Phosphothreonine modification is found at Thr118. The Protein kinase domain maps to 841–1099; the sequence is FTILQVMGEG…IDEIYEDKWL (259 aa). Residues 847–855 and Lys870 each bind ATP; that span reads MGEGAYGKV. Asp975 (proton acceptor) is an active-site residue.

The protein belongs to the protein kinase superfamily. Ser/Thr protein kinase family.

It is found in the cytoplasm. It catalyses the reaction L-seryl-[protein] + ATP = O-phospho-L-seryl-[protein] + ADP + H(+). It carries out the reaction L-threonyl-[protein] + ATP = O-phospho-L-threonyl-[protein] + ADP + H(+). Functionally, serine/threonine-protein kinase involved in the control of sugar metabolism and translation. Phosphorylates UGP1, which is required for normal glycogen and beta-(1,6)-glucan synthesis. This phosphorylation shifts glucose partitioning toward cell wall glucan synthesis at the expense of glycogen synthesis. Also phosphorylates the glycogen synthase GSY2 and the translation factors CAF20, TIF11 and SRO9. This is Serine/threonine-protein kinase PSK2 (PSK2) from Saccharomyces cerevisiae (strain ATCC 204508 / S288c) (Baker's yeast).